Consider the following 300-residue polypeptide: Protein sprouty homolog 4 (300 aa).

Met1 carries the post-translational modification N-acetylmethionine. Disordered stretches follow at residues 1-28 and 52-114; these read MEPP…SRAP and DYID…RLLD. Composition is skewed to low complexity over residues 7 to 21 and 92 to 108; these read QSSV…MVQP and SFSG…STSS. Ser126 is modified (phosphoserine). In terms of domain architecture, SPR spans 167 to 274; that stretch reads KCKECASPRT…GYDRLRRPGC (108 aa).

The protein belongs to the sprouty family. As to quaternary structure, interacts (via C-terminus) with TESK1 (via both C- and N-termini); the interaction inhibits TESK1 kinase activity. Interacts with RAF1. Interacts with CAV1 (via C-terminus). Expressed in the embryo and adult tissues including heart, brain, lung, kidney, and skeletal muscle.

The protein localises to the cytoplasm. The protein resides in the cell projection. It is found in the ruffle membrane. Suppresses the insulin receptor and EGFR-transduced MAPK signaling pathway, but does not inhibit MAPK activation by a constitutively active mutant Ras. Probably impairs the formation of GTP-Ras. Inhibits Ras-independent, but not Ras-dependent, activation of RAF1. Represses integrin-mediated cell spreading via inhibition of TESK1-mediated phosphorylation of cofilin. This Mus musculus (Mouse) protein is Protein sprouty homolog 4 (Spry4).